Consider the following 337-residue polypeptide: Anthranilate phosphoribosyltransferase (337 aa).

5-phospho-alpha-D-ribose 1-diphosphate is bound by residues G80, 83–84, T88, 90–93, 108–116, and S120; these read GD, NIST, and KHGNRAVSS. Residue G80 participates in anthranilate binding. S92 is a binding site for Mg(2+). N111 is an anthranilate binding site. Residue R166 coordinates anthranilate. Positions 224 and 225 each coordinate Mg(2+).

Belongs to the anthranilate phosphoribosyltransferase family. In terms of assembly, homodimer. Mg(2+) serves as cofactor.

The catalysed reaction is N-(5-phospho-beta-D-ribosyl)anthranilate + diphosphate = 5-phospho-alpha-D-ribose 1-diphosphate + anthranilate. The protein operates within amino-acid biosynthesis; L-tryptophan biosynthesis; L-tryptophan from chorismate: step 2/5. Its function is as follows. Catalyzes the transfer of the phosphoribosyl group of 5-phosphorylribose-1-pyrophosphate (PRPP) to anthranilate to yield N-(5'-phosphoribosyl)-anthranilate (PRA). The sequence is that of Anthranilate phosphoribosyltransferase from Anaeromyxobacter sp. (strain Fw109-5).